The following is a 602-amino-acid chain: Elongation factor 4 (602 aa).

In terms of domain architecture, tr-type G spans 7–188 (ENIRNFSIIA…AIIDLVPPPK (182 aa)). Residues 19-24 (DHGKST) and 135-138 (NKID) contribute to the GTP site.

It belongs to the TRAFAC class translation factor GTPase superfamily. Classic translation factor GTPase family. LepA subfamily.

It localises to the cell inner membrane. It catalyses the reaction GTP + H2O = GDP + phosphate + H(+). Functionally, required for accurate and efficient protein synthesis under certain stress conditions. May act as a fidelity factor of the translation reaction, by catalyzing a one-codon backward translocation of tRNAs on improperly translocated ribosomes. Back-translocation proceeds from a post-translocation (POST) complex to a pre-translocation (PRE) complex, thus giving elongation factor G a second chance to translocate the tRNAs correctly. Binds to ribosomes in a GTP-dependent manner. The sequence is that of Elongation factor 4 from Chlamydia pneumoniae (Chlamydophila pneumoniae).